A 396-amino-acid polypeptide reads, in one-letter code: Probable sugar efflux transporter (396 aa).

The next 12 helical transmembrane spans lie at 15 to 35 (VVTL…PVGL), 50 to 70 (VGIM…PFML), 81 to 101 (LICL…AWNF), 103 to 123 (VLVI…SITA), 136 to 156 (AQAL…GLPI), 169 to 189 (TFFA…KLLP), 209 to 229 (PALM…YTAY), 246 to 266 (FATV…LVFG), 275 to 295 (SLVS…LPAA), 301 to 321 (LAIL…GMQV), 333 to 353 (VAMA…ALVG), and 364 to 384 (AIGY…VLIF).

It belongs to the major facilitator superfamily. SotB (TC 2.A.1.2) family.

Its subcellular location is the cell inner membrane. In terms of biological role, involved in the efflux of sugars. The physiological role may be the reduction of the intracellular concentration of toxic sugars or sugar metabolites. The protein is Probable sugar efflux transporter of Salmonella agona (strain SL483).